Consider the following 135-residue polypeptide: Methylglyoxal synthase (135 aa).

The 135-residue stretch at 1–135 folds into the MGS-like domain; the sequence is MPKRRRIALI…AQPDPKEIHA (135 aa). Substrate contacts are provided by residues His12, Lys16, 38–41, and 58–59; these read TGTT and SG. The active-site Proton donor/acceptor is the Asp64. His91 serves as a coordination point for substrate.

It belongs to the methylglyoxal synthase family.

It catalyses the reaction dihydroxyacetone phosphate = methylglyoxal + phosphate. Its function is as follows. Catalyzes the formation of methylglyoxal from dihydroxyacetone phosphate. The chain is Methylglyoxal synthase from Ralstonia nicotianae (strain ATCC BAA-1114 / GMI1000) (Ralstonia solanacearum).